Reading from the N-terminus, the 248-residue chain is Cobalt transport protein CbiM (248 aa).

Positions 1–29 are cleaved as a signal peptide; it reads MKRVSVKNYLVCLLIAVCAIFVFPANASA. 6 helical membrane passes run 40–60, 72–92, 104–124, 136–156, 167–187, and 210–230; these read GWCI…FFSI, TLLA…MPSV, LGAV…ILLF, TLGA…FGVF, GLAV…ITSV, and IFGF…VVIY.

This sequence belongs to the CbiM family. In terms of assembly, forms an energy-coupling factor (ECF) transporter complex composed of an ATP-binding protein (A component, CbiO), a transmembrane protein (T component, CbiQ) and 2 possible substrate-capture proteins (S components, CbiM and CbiN) of unknown stoichimetry.

Its subcellular location is the cell membrane. Its pathway is cofactor biosynthesis; adenosylcobalamin biosynthesis. Its function is as follows. Part of the energy-coupling factor (ECF) transporter complex CbiMNOQ involved in cobalt import. This Ruminiclostridium cellulolyticum (strain ATCC 35319 / DSM 5812 / JCM 6584 / H10) (Clostridium cellulolyticum) protein is Cobalt transport protein CbiM.